A 1704-amino-acid chain; its full sequence is Nonribosomal peptide synthetase ivoA (1704 aa).

The adenylation stretch occupies residues 234–620; sequence EEQAIARPDQ…HGRKDLEVKI (387 aa). In terms of domain architecture, Carrier spans 748–827; sequence NLISDPSDSM…EMATKTSAVE (80 aa). Position 785 is an O-(pantetheine 4'-phosphoryl)serine (S785). The interval 840 to 1266 is epimerization (E) domain; sequence FPLSPVQQMY…QELLETAVER (427 aa). Residues 1325–1477 are condensation; it reads VQGDWTIEKT…AQSSTPSARK (153 aa).

The protein belongs to the NRP synthetase family.

It catalyses the reaction L-tryptophan + ATP + H2O = D-tryptophan + AMP + diphosphate + H(+). It participates in pigment biosynthesis. Its function is as follows. Nonribosomal peptide synthetase; part of the pathway that mediates the biosynthesis of the gray-brown conidiophore pigment. The first step of the pathway is performed by the nonribosomal peptide synthetase ivoA that catalyzes ATP-dependent unidirectional stereoinversion of L-tryptophan to D-tryptophan with complete conversion. While the stereoinversion is catalyzed by the epimerization (E) domain of ivoA, the terminal condensation (C) domain stereoselectively hydrolyzes D-tryptophanyl-S-phosphopantetheine thioester and thus represents a non-canonical C domain function. D-tryptophan is acetylated, probably by an endogenous acetyltransferase. N-acetyltryptophan is further 6-hydroxylated into N-acetyl-6-hydroxytryptophan (AHT) by the cytochrome P450 monooxygenase ivoC. N-acetyl-6-hydroxytryptophan is substrate of the N-acetyl-6-hydroxytryptophan oxidase ivoB to produce the gray-brown conidiophore pigment. In Emericella nidulans (strain FGSC A4 / ATCC 38163 / CBS 112.46 / NRRL 194 / M139) (Aspergillus nidulans), this protein is Nonribosomal peptide synthetase ivoA.